Here is a 188-residue protein sequence, read N- to C-terminus: Protein-L-isoaspartate O-methyltransferase (188 aa).

The active site involves Ser33.

Belongs to the methyltransferase superfamily. L-isoaspartyl/D-aspartyl protein methyltransferase family.

It is found in the cytoplasm. It carries out the reaction [protein]-L-isoaspartate + S-adenosyl-L-methionine = [protein]-L-isoaspartate alpha-methyl ester + S-adenosyl-L-homocysteine. Its function is as follows. Catalyzes the methyl esterification of L-isoaspartyl residues in peptides and proteins that result from spontaneous decomposition of normal L-aspartyl and L-asparaginyl residues. It plays a role in the repair and/or degradation of damaged proteins. This chain is Protein-L-isoaspartate O-methyltransferase, found in Methanocella arvoryzae (strain DSM 22066 / NBRC 105507 / MRE50).